The sequence spans 90 residues: uncharacterized protein (90 aa).

The interval 53–90 is disordered; that stretch reads WRARPDANDADTTSSSSSSETCTESDDSSDVPPARYAV. Residues 63 to 74 are compositionally biased toward low complexity; that stretch reads DTTSSSSSSETC.

This is an uncharacterized protein from Orgyia pseudotsugata (Douglas-fir tussock moth).